The sequence spans 513 residues: MQLNSTEISELIKKRIAQFDVVSEARNTGTIVSVSDGIIRIHGLSDVMQGEMIALPGNRYAMALNLERDSVGAVVMGPYADLAEGMEVQCTGRILEVPVGRGLLGRVVNTLGQPIDGKGEIDNDGFSPVEVIAPGVIDRRSVDQPVQTGYKAVDSMVPIGRGQRELIIGDRQTGKTALAIDAIINQRNSGIKCIYVAIGQKASTIANVVRKLEEHGALANTIVVAASASESAALQYLAPYAGCAMGEYFRDRGEDALIVYDDLSKQAVAYRQISLLLRRPPGREAYPGDVFYLHSRLLERASRVNEDYVEKFTKGEVKGKTGSLTALPIIETQAGDVSAFVPTNVISITDGQIFLESNLFNSGIRPAVNPGISVSRVGGSAQTKVIKKLAGGIRTALAQYRELAAFAQFASDLDDATRKQLSHGEKVTELLKQKQFAPLSVAEQAVILFAVEFGYLDDVELSKIASFETALLDYSNRNHAEFMQELNKTGNYNDEIKDTLKSILDGFKANSAW.

169 to 176 (GDRQTGKT) is a binding site for ATP.

The protein belongs to the ATPase alpha/beta chains family. F-type ATPases have 2 components, CF(1) - the catalytic core - and CF(0) - the membrane proton channel. CF(1) has five subunits: alpha(3), beta(3), gamma(1), delta(1), epsilon(1). CF(0) has three main subunits: a(1), b(2) and c(9-12). The alpha and beta chains form an alternating ring which encloses part of the gamma chain. CF(1) is attached to CF(0) by a central stalk formed by the gamma and epsilon chains, while a peripheral stalk is formed by the delta and b chains.

The protein resides in the cell inner membrane. It catalyses the reaction ATP + H2O + 4 H(+)(in) = ADP + phosphate + 5 H(+)(out). Functionally, produces ATP from ADP in the presence of a proton gradient across the membrane. The alpha chain is a regulatory subunit. The polypeptide is ATP synthase subunit alpha (Haemophilus influenzae (strain PittGG)).